The following is a 604-amino-acid chain: Glutamine--fructose-6-phosphate aminotransferase [isomerizing] (604 aa).

The Nucleophile; for GATase activity role is filled by cysteine 2. In terms of domain architecture, Glutamine amidotransferase type-2 spans 2–219 (CGIMGAVSER…EGDSACVTTQ (218 aa)). SIS domains lie at 279–427 (LRAS…DNRA) and 454–594 (LASL…VDQP). Residue lysine 599 is the For Fru-6P isomerization activity of the active site.

In terms of assembly, homodimer.

The protein resides in the cytoplasm. It carries out the reaction D-fructose 6-phosphate + L-glutamine = D-glucosamine 6-phosphate + L-glutamate. Catalyzes the first step in hexosamine metabolism, converting fructose-6P into glucosamine-6P using glutamine as a nitrogen source. The protein is Glutamine--fructose-6-phosphate aminotransferase [isomerizing] of Legionella pneumophila subsp. pneumophila (strain Philadelphia 1 / ATCC 33152 / DSM 7513).